Here is a 170-residue protein sequence, read N- to C-terminus: MNLKDFIRDIPDFPKPGIIFKDVTPMLKDPGAFKVCISSLKELVKDFEFNLIVAPEARGFIFAAPLALELEKGFVPIRKPGKLPYKTVSVEYSLEYGTATLEMHTDAIKEGDKVLIVDDVLATGGTMKAIAEMVEKVGGTISGIVSLVELSFLEPRKKLSGYEVRSIITY.

This sequence belongs to the purine/pyrimidine phosphoribosyltransferase family. In terms of assembly, homodimer.

The protein resides in the cytoplasm. The enzyme catalyses AMP + diphosphate = 5-phospho-alpha-D-ribose 1-diphosphate + adenine. It functions in the pathway purine metabolism; AMP biosynthesis via salvage pathway; AMP from adenine: step 1/1. Its function is as follows. Catalyzes a salvage reaction resulting in the formation of AMP, that is energically less costly than de novo synthesis. This Kosmotoga olearia (strain ATCC BAA-1733 / DSM 21960 / TBF 19.5.1) protein is Adenine phosphoribosyltransferase.